A 150-amino-acid polypeptide reads, in one-letter code: Thyroid hormone-inducible hepatic protein (150 aa).

The interval Lys-83 to Glu-104 is disordered. Phosphoserine is present on Ser-90. Over residues Ser-90 to Glu-104 the composition is skewed to acidic residues.

The protein belongs to the SPOT14 family. As to quaternary structure, homodimer. Heterodimer with MID1IP1. Interacts with THRB and PLAGL1. Mainly expressed in tissues that synthesize triglycerides.

Its subcellular location is the nucleus. The protein localises to the cytoplasm. In terms of biological role, plays a role in the regulation of lipogenesis, especially in lactating mammary gland. Important for the biosynthesis of triglycerides with medium-length fatty acid chains. May modulate lipogenesis by interacting with MID1IP1 and preventing its interaction with ACACA. May function as transcriptional coactivator. May modulate the transcription factor activity of THRB. In Mus musculus (Mouse), this protein is Thyroid hormone-inducible hepatic protein (Thrsp).